The following is a 125-amino-acid chain: Snaclec VP12 subunit B (125 aa).

3 cysteine pairs are disulfide-bonded: Cys4-Cys15, Cys32-Cys121, and Cys98-Cys113. One can recognise a C-type lectin domain in the interval 11 to 122; the sequence is FEKYCYKVFQ…CNDPRYFVCK (112 aa).

This sequence belongs to the snaclec family. In terms of assembly, heterodimer of subunits alpha and beta; disulfide-linked. In terms of tissue distribution, expressed by the venom gland.

The protein localises to the secreted. Inhibits integrin alpha-2/beta-1- (ITGA2/ITGB1) dependent melanoma metastasis. In Daboia palaestinae (Palestine viper), this protein is Snaclec VP12 subunit B.